Consider the following 223-residue polypeptide: Deoxyribose-phosphate aldolase (223 aa).

Aspartate 91 acts as the Proton donor/acceptor in catalysis. Lysine 153 (schiff-base intermediate with acetaldehyde) is an active-site residue. Catalysis depends on lysine 182, which acts as the Proton donor/acceptor.

The protein belongs to the DeoC/FbaB aldolase family. DeoC type 1 subfamily.

The protein localises to the cytoplasm. It carries out the reaction 2-deoxy-D-ribose 5-phosphate = D-glyceraldehyde 3-phosphate + acetaldehyde. It participates in carbohydrate degradation; 2-deoxy-D-ribose 1-phosphate degradation; D-glyceraldehyde 3-phosphate and acetaldehyde from 2-deoxy-alpha-D-ribose 1-phosphate: step 2/2. Its function is as follows. Catalyzes a reversible aldol reaction between acetaldehyde and D-glyceraldehyde 3-phosphate to generate 2-deoxy-D-ribose 5-phosphate. This is Deoxyribose-phosphate aldolase from Streptococcus pyogenes serotype M1.